The chain runs to 408 residues: MSSSNVKKVALAYSGGLDTSVILKWLQETYGCEVVTFTADLGQGEEVEPARAKAQAMGVKEIYIDDLREEFSRDFVFPMFRANAIYEGEYLLGTSIARPLIAKRLIEIANETGADAIAHGATGKGNDQVRFELGAYALRPDIRVIAPWREWELTSRETLLAYAESRGIPIEMKRGKTSPYSMDANLLHISYEGGILEDPWAEPEETMWRWSVSPENAPDRPTYVELTYEHGDIVAIDGERMTAAAVLARLNQLGGANGIGRLDIVENRYVGMKSRGCYETPGGTIMLKAHRAIESITLDREVAHLKDELMPRYASLIYNGYWWSPERRMLQQMIDASQATVNGVVRVKLYKGNVSVVGRKSESNSLFDMNIATFEDDRGAYDQKDAEGFIKLNALRLRIAGRKGASFA.

Residues Ala12–Ser20 and Ala39 each bind ATP. L-citrulline-binding residues include Tyr90 and Ser95. Residue Gly120 participates in ATP binding. Positions 122, 126, and 127 each coordinate L-aspartate. Position 126 (Asn126) interacts with L-citrulline. L-citrulline is bound by residues Arg130, Ser181, Ser190, Glu266, and Tyr278.

The protein belongs to the argininosuccinate synthase family. Type 1 subfamily. As to quaternary structure, homotetramer.

The protein resides in the cytoplasm. The enzyme catalyses L-citrulline + L-aspartate + ATP = 2-(N(omega)-L-arginino)succinate + AMP + diphosphate + H(+). The protein operates within amino-acid biosynthesis; L-arginine biosynthesis; L-arginine from L-ornithine and carbamoyl phosphate: step 2/3. The polypeptide is Argininosuccinate synthase (Methylococcus capsulatus (strain ATCC 33009 / NCIMB 11132 / Bath)).